Consider the following 228-residue polypeptide: MPGRTAPTRSEPVPDRAEARTRMVETQLVARGIRDAAVLDAMRAVPREAFVPDALAGEAYGDGPLPIGVGQTISQPYIVALMIEALALRPGDRVLEVGAGCGYAAAVLARMGVQVFAIERHAALGEAARARLAALGLTVSLRIGDGHAGWPEAAPFDAILVSAAGSTIPEALKAQLKPRGRLVIPVGPPGGQTLLRLTRRGRDRFESRDFGPVSFVPLLRGVGTADPV.

Residue S74 is part of the active site.

It belongs to the methyltransferase superfamily. L-isoaspartyl/D-aspartyl protein methyltransferase family.

It localises to the cytoplasm. It carries out the reaction [protein]-L-isoaspartate + S-adenosyl-L-methionine = [protein]-L-isoaspartate alpha-methyl ester + S-adenosyl-L-homocysteine. Catalyzes the methyl esterification of L-isoaspartyl residues in peptides and proteins that result from spontaneous decomposition of normal L-aspartyl and L-asparaginyl residues. It plays a role in the repair and/or degradation of damaged proteins. The sequence is that of Protein-L-isoaspartate O-methyltransferase from Methylorubrum extorquens (strain PA1) (Methylobacterium extorquens).